We begin with the raw amino-acid sequence, 299 residues long: HTH-type transcriptional regulator ArgP (299 aa).

Positions 4–60 (PDYRALQALDAVIRERGFERAAQKLCITQSAVSQRIKQLENLFGQPLLVRTVPPQPT) constitute an HTH lysR-type domain. A DNA-binding region (H-T-H motif) is located at residues 21-40 (FERAAQKLCITQSAVSQRIK).

It belongs to the LysR transcriptional regulatory family. Homodimer.

In terms of biological role, controls the transcription of genes involved in arginine and lysine metabolism. The protein is HTH-type transcriptional regulator ArgP of Proteus mirabilis (strain HI4320).